The chain runs to 226 residues: Elongation factor G (226 aa).

It belongs to the GTP-binding elongation factor family. EF-G/EF-2 subfamily.

The protein localises to the cytoplasm. Functionally, catalyzes the GTP-dependent ribosomal translocation step during translation elongation. During this step, the ribosome changes from the pre-translocational (PRE) to the post-translocational (POST) state as the newly formed A-site-bound peptidyl-tRNA and P-site-bound deacylated tRNA move to the P and E sites, respectively. Catalyzes the coordinated movement of the two tRNA molecules, the mRNA and conformational changes in the ribosome. The polypeptide is Elongation factor G (fusA) (Neisseria gonorrhoeae).